The chain runs to 727 residues: Cadmium-transporting ATPase (727 aa).

The region spanning 12–75 (EMNVYRVQGF…AGAFENLKVS (64 aa)) is the HMA domain. Residues C23 and C26 each coordinate Cd(2+). 5 helical membrane-spanning segments follow: residues 106 to 126 (STLL…FVNG), 130 to 150 (LVTS…LFKV), 171 to 191 (IGAT…LFAI), 336 to 356 (IIMV…GGSW), and 364 to 384 (LAVL…ISIV). Catalysis depends on D415, which acts as the 4-aspartylphosphate intermediate. 2 helical membrane-spanning segments follow: residues 672–694 (LNII…LLVI) and 699–721 (TLWI…SLRL).

Belongs to the cation transport ATPase (P-type) (TC 3.A.3) family. Type IB subfamily.

The protein resides in the cell membrane. The enzyme catalyses Cd(2+)(in) + ATP + H2O = Cd(2+)(out) + ADP + phosphate + H(+). Its activity is regulated as follows. Inhibited by the antibiotic bafilomycin A1. Partially inhibited by DCCD, nigericin and FCCP. In terms of biological role, couples the hydrolysis of ATP with the export of cadmium. Involved in cadmium resistance. In Staphylococcus aureus, this protein is Cadmium-transporting ATPase.